A 405-amino-acid chain; its full sequence is Splicing factor 45 (405 aa).

Position 2 is an N-acetylserine (serine 2). Residue serine 2 is modified to Phosphoserine. Lysine 15 is covalently cross-linked (Glycyl lysine isopeptide (Lys-Gly) (interchain with G-Cter in SUMO2)). The residue at position 21 (lysine 21) is an N6-acetyllysine. Glycyl lysine isopeptide (Lys-Gly) (interchain with G-Cter in SUMO2) cross-links involve residues lysine 24 and lysine 33. Lysine 41 is subject to N6-acetyllysine; alternate. Lysine 41 participates in a covalent cross-link: Glycyl lysine isopeptide (Lys-Gly) (interchain with G-Cter in SUMO2); alternate. Residues 57-68 (LKRGGSSDDRQI) are compositionally biased toward basic and acidic residues. 2 disordered regions span residues 57–88 (LKRG…SGFS) and 114–233 (RQRE…FLAN). A Glycyl lysine isopeptide (Lys-Gly) (interchain with G-Cter in SUMO2) cross-link involves residue lysine 58. Phosphothreonine is present on threonine 71. The span at 114–153 (RQREERQRQRELERQKEIEEREKRRKDRHEASGFSRRPDP) shows a compositional bias: basic and acidic residues. A phosphoserine mark is found at serine 155 and serine 169. Over residues 182-200 (VEKDKELPRDFPYEEDSRP) the composition is skewed to basic and acidic residues. At serine 222 the chain carries Phosphoserine. One can recognise a G-patch domain in the interval 235 to 283 (GGTVAHKIMQKYGFREGQGLGKHEQGLSTALSVEKTSKRGGKIIVGDAT). A Phosphothreonine modification is found at threonine 237. Lysine 256 is covalently cross-linked (Glycyl lysine isopeptide (Lys-Gly) (interchain with G-Cter in SUMO2)). A Phosphoserine modification is found at serine 266. A Glycyl lysine isopeptide (Lys-Gly) (interchain with G-Cter in SUMO2) cross-link involves residue lysine 276. Phosphoserine occurs at positions 295 and 297. One can recognise an RRM domain in the interval 310–389 (VVLLRNMVGA…YFGGRVVKAC (80 aa)).

As to quaternary structure, binds SXL. Associates with the spliceosome. Interacts with SF3B1, SF1 and U2AF2.

The protein resides in the nucleus. In terms of biological role, splice factor that binds to the single-stranded 3'AG at the exon/intron border and promotes its utilization in the second catalytic step. Involved in the regulation of alternative splicing and the utilization of cryptic splice sites. The sequence is that of Splicing factor 45 (Rbm17) from Mus musculus (Mouse).